Reading from the N-terminus, the 446-residue chain is Exodeoxyribonuclease 7 large subunit (446 aa).

The protein belongs to the XseA family. In terms of assembly, heterooligomer composed of large and small subunits.

It localises to the cytoplasm. The enzyme catalyses Exonucleolytic cleavage in either 5'- to 3'- or 3'- to 5'-direction to yield nucleoside 5'-phosphates.. Bidirectionally degrades single-stranded DNA into large acid-insoluble oligonucleotides, which are then degraded further into small acid-soluble oligonucleotides. The sequence is that of Exodeoxyribonuclease 7 large subunit from Acholeplasma laidlawii (strain PG-8A).